The chain runs to 519 residues: Probable FAD synthase (519 aa).

Residues 17–108 (AILVIGDEIL…TDQMQFSDEI (92 aa)) are molybdenum cofactor biosynthesis protein-like. Residues 328 to 485 (QIALSFNGGK…SLGGRDNTVK (158 aa)) are FAD synthase.

In the N-terminal section; belongs to the MoaB/Mog family. It in the C-terminal section; belongs to the PAPS reductase family. FAD1 subfamily. It depends on Mg(2+) as a cofactor.

It carries out the reaction FMN + ATP + H(+) = FAD + diphosphate. The protein operates within cofactor biosynthesis; FAD biosynthesis; FAD from FMN: step 1/1. Its function is as follows. Catalyzes the adenylation of flavin mononucleotide (FMN) to form flavin adenine dinucleotide (FAD) coenzyme. This is Probable FAD synthase from Caenorhabditis elegans.